A 134-amino-acid chain; its full sequence is MLVTLLETFSVVFQVANGDGNCVPRFQDDVEFCDNYILEAVTEASKMIAPRAREQKLCCGFNKFTHCVTTASKKCSEAADRVKRVLDTKMTSLGVHCPDTNKVCNGGVNTSVSANTVTVYLLFSLGYFFYMNKL.

Positions 1–18 (MLVTLLETFSVVFQVANG) are cleaved as a signal peptide. Positions 19–56 (DGNCVPRFQDDVEFCDNYILEAVTEASKMIAPRAREQK) are excised as a propeptide.

In terms of tissue distribution, expressed by the venom gland.

The protein resides in the secreted. Probable secreted venom toxin. The polypeptide is U35-theraphotoxin-Cg1a (Chilobrachys guangxiensis (Chinese earth tiger tarantula)).